A 760-amino-acid chain; its full sequence is Xaa-Pro dipeptidyl-peptidase (760 aa).

Active-site charge relay system residues include serine 349, aspartate 469, and histidine 499.

This sequence belongs to the peptidase S15 family. Homodimer.

The protein resides in the cytoplasm. It carries out the reaction Hydrolyzes Xaa-Pro-|- bonds to release unblocked, N-terminal dipeptides from substrates including Ala-Pro-|-p-nitroanilide and (sequentially) Tyr-Pro-|-Phe-Pro-|-Gly-Pro-|-Ile.. In terms of biological role, removes N-terminal dipeptides sequentially from polypeptides having unsubstituted N-termini provided that the penultimate residue is proline. The protein is Xaa-Pro dipeptidyl-peptidase of Streptococcus pyogenes serotype M6 (strain ATCC BAA-946 / MGAS10394).